The primary structure comprises 864 residues: Dynamin-1 (864 aa).

Residues 28–294 form the Dynamin-type G domain; it reads DLDLPQIAVV…LTNHIRDTLP (267 aa). Residues 38–45 form a G1 motif region; sequence GGQSAGKS. 7 residues coordinate GDP: serine 41, glycine 43, lysine 44, serine 45, serine 46, arginine 59, and glycine 60. The G2 motif stretch occupies residues 64-66; the sequence is VTR. At tyrosine 80 the chain carries Phosphotyrosine. The residue at position 125 (tyrosine 125) is a 3'-nitrotyrosine; alternate. Tyrosine 125 carries the post-translational modification Phosphotyrosine; alternate. A G3 motif region spans residues 136–139; that stretch reads DLPG. Residues 205 to 208 are G4 motif; it reads TKLD. Positions 206, 208, 211, 236, 237, and 239 each coordinate GDP. Residues 235 to 238 are G5 motif; sequence VNRS. A phosphoserine mark is found at serine 306 and serine 347. Tyrosine 354 is subject to Phosphotyrosine. Serine 512 bears the Phosphoserine mark. The 107-residue stretch at 519–625 folds into the PH domain; sequence LVIRKGWLTI…WKASFLRAGV (107 aa). The region spanning 659–750 is the GED domain; that stretch reads VETIRNLVDS…IIGDINTTTV (92 aa). The segment at 767 to 864 is disordered; sequence SVPAGRRSPT…PESPRPPFDL (98 aa). Serine 774 bears the Phosphoserine; by CDK5 mark. The residue at position 778 (serine 778) is a Phosphoserine. Arginine 796 carries the post-translational modification Omega-N-methylarginine. Serine 822 carries the phosphoserine modification. Residues 825 to 843 are compositionally biased toward pro residues; sequence PFGPPPQVPSRPNRAPPGV. Residues serine 851 and serine 857 each carry the phosphoserine modification.

The protein belongs to the TRAFAC class dynamin-like GTPase superfamily. Dynamin/Fzo/YdjA family. Homodimer; homodimerization is mediated by the dynamin-type G domain which promotes assembly-stimulated GTPase activity. Homo-tetramer formed from two dimers in the absence of lipid. Oligomerizes into a helical polymer that self-assembles around the vesicle membrane, when associated to the menbrane through lipid binding. Interacts (via C-terminal proline-rich domain (PRD)) with SNX9 (via SH3 domain); this interaction allows regulation of DNM1 self-assembly during late stages of endocytic vesicle formation and supports DNM1's early functions in accelerating clathrin-coated pits (CCPs) maturation in non neuronals cell. Interacts (via C-terminal proline-rich domain (PRD)) with MYO1E (via SH3 domain); this interaction regulates receptor-mediated endocytosis. Interacts with SNX33 (via SH3 domain); this interaction decreases DNM1-dependent endocytosis. Interacts with DIAPH1. Interacts with GRB2 (via SH3 domain); this interaction mediates disassembly of DNM1 polymers, therefore modulates self-assembly. Forms a complex with BIN1 (via SH3 domain) and SH3GL2 (via SH3 domain). Forms a complex with SH3GL2 (via SH3 domain) and AMPH (via SH3 domain). Forms a complex with SH3GL2 (via SH3 domain) and SYNJ1. Interacts with AMPH. Interacts (via C-terminal proline-rich domain (PRD)) with SYT1; this interaction facilitates vesicle fission during clathrin-mediated endocytosis (CME). Interacts (via C-terminal proline-rich domain (PRD)) with PLCG1 (via SH3 domain); this interaction stimulates the release of GDP from DNM1 and enhances DNM1-dependent endocytosis. Interacts with SNPH; this interaction inhibits the binding of DNM1 to AMPH and DNM1-receptor-mediated endocytosis. Interacts with CAV1. Interacts with SH3GLB1 (via SH3 domain). Interacts with PACSIN1 (via SH3 domain), PACSIN2 (via SH3 domain) and PACSIN3 (via SH3 domain). Interacts with UNC119; this interaction decreases DNM1's GTPase activity and affects DNM1's interaction with AMPH. Interacts (GTP-bound form) with DNAJC6; this interaction allows clathrin-coated vesicle (CCV) formation at the plasma membrane. Post-translationally, phosphorylation at Ser-774 by GSK3B/GSK3-beta leads to inactivation of receptor-mediated endocytosis in non-neuronal cells. Dephosphorylation at Ser-774, through the EGFR downstream signaling, leads to activation and regulates early stages of clathrin-mediated endocytosis (CME). Phosphorylated by CDK5 leading to synaptic vesicle endocytosis (SVE) activation. Brain-specific (peripheral sensory neurons).

The protein localises to the cytoplasmic vesicle. The protein resides in the clathrin-coated vesicle. It localises to the golgi apparatus. Its subcellular location is the cell membrane. It is found in the membrane. The protein localises to the clathrin-coated pit. The protein resides in the presynapse. It localises to the secretory vesicle. Its subcellular location is the chromaffin granule. It catalyses the reaction GTP + H2O = GDP + phosphate + H(+). Functionally, catalyzes the hydrolysis of GTP and utilizes this energy to mediate vesicle scission and participates in many forms of endocytosis, such as clathrin-mediated endocytosis or synaptic vesicle endocytosis as well as rapid endocytosis (RE). Associates to the membrane, through lipid binding, and self-assembles into rings and stacks of interconnected rings through oligomerization to form a helical polymer around the vesicle membrane leading to constriction of invaginated coated pits around their necks. Self-assembly of the helical polymer induces membrane tubules narrowing until the polymer reaches a length sufficient to trigger GTP hydrolysis. Depending on the curvature imposed on the tubules, membrane detachment from the helical polymer upon GTP hydrolysis can cause spontaneous hemifission followed by complete fission. May play a role in regulating early stages of clathrin-mediated endocytosis in non-neuronal cells through its activation by dephosphorylation via the signaling downstream of EGFR. Controls vesicle size at a step before fission, during formation of membrane pits, at hippocampal synapses. Controls plastic adaptation of the synaptic vesicle recycling machinery to high levels of activity. Mediates rapid endocytosis (RE), a Ca(2+)-dependent and clathrin- and K(+)-independent process in chromaffin cells. Microtubule-associated force-producing protein involved in producing microtubule bundles and able to bind and hydrolyze GTP. Through its interaction with DNAJC6, acts during the early steps of clathrin-coated vesicle (CCV) formation. The protein is Dynamin-1 (Dnm1) of Rattus norvegicus (Rat).